Here is a 446-residue protein sequence, read N- to C-terminus: Thymidine phosphorylase (446 aa).

The protein belongs to the thymidine/pyrimidine-nucleoside phosphorylase family. As to quaternary structure, homodimer.

It carries out the reaction thymidine + phosphate = 2-deoxy-alpha-D-ribose 1-phosphate + thymine. It participates in pyrimidine metabolism; dTMP biosynthesis via salvage pathway; dTMP from thymine: step 1/2. In terms of biological role, the enzymes which catalyze the reversible phosphorolysis of pyrimidine nucleosides are involved in the degradation of these compounds and in their utilization as carbon and energy sources, or in the rescue of pyrimidine bases for nucleotide synthesis. In Psychromonas ingrahamii (strain DSM 17664 / CCUG 51855 / 37), this protein is Thymidine phosphorylase.